The following is a 735-amino-acid chain: Type-3 glutamine synthetase (735 aa).

The GS beta-grasp domain occupies 89–183 (THYCHWFLPL…IPTAFCSWTG (95 aa)). The 434-residue stretch at 188 to 621 (QKTPLLRSME…SLYDLVSTLV (434 aa)) folds into the GS catalytic domain.

Belongs to the glutamine synthetase family. Type 3 subfamily. As to quaternary structure, homohexamer.

It carries out the reaction L-glutamate + NH4(+) + ATP = L-glutamine + ADP + phosphate + H(+). This chain is Type-3 glutamine synthetase (glnA3), found in Dictyostelium discoideum (Social amoeba).